Consider the following 117-residue polypeptide: NADH-ubiquinone oxidoreductase chain 3 (117 aa).

Helical transmembrane passes span isoleucine 2–leucine 22, phenylalanine 56–valine 76, and serine 85–tyrosine 105.

The protein belongs to the complex I subunit 3 family.

The protein localises to the mitochondrion membrane. It carries out the reaction a ubiquinone + NADH + 5 H(+)(in) = a ubiquinol + NAD(+) + 4 H(+)(out). Its function is as follows. Core subunit of the mitochondrial membrane respiratory chain NADH dehydrogenase (Complex I) that is believed to belong to the minimal assembly required for catalysis. Complex I functions in the transfer of electrons from NADH to the respiratory chain. The immediate electron acceptor for the enzyme is believed to be ubiquinone. The polypeptide is NADH-ubiquinone oxidoreductase chain 3 (ND3) (Albinaria caerulea (Land snail)).